A 385-amino-acid polypeptide reads, in one-letter code: Actin-2 (385 aa).

This sequence belongs to the actin family. ARP1 subfamily.

Its subcellular location is the cytoplasm. The protein localises to the cytoskeleton. This is Actin-2 from Pneumocystis carinii.